The primary structure comprises 207 residues: Adenine phosphoribosyltransferase (207 aa).

Positions Met-1–Ala-33 are disordered.

The protein belongs to the purine/pyrimidine phosphoribosyltransferase family. In terms of assembly, homodimer.

The protein localises to the cytoplasm. It catalyses the reaction AMP + diphosphate = 5-phospho-alpha-D-ribose 1-diphosphate + adenine. Its pathway is purine metabolism; AMP biosynthesis via salvage pathway; AMP from adenine: step 1/1. Catalyzes a salvage reaction resulting in the formation of AMP, that is energically less costly than de novo synthesis. This chain is Adenine phosphoribosyltransferase, found in Corynebacterium jeikeium (strain K411).